The chain runs to 171 residues: Small ribosomal subunit protein uS5 (171 aa).

The S5 DRBM domain maps to 16–79 (LIEKIVFINR…ERARKDMALV (64 aa)).

Belongs to the universal ribosomal protein uS5 family. In terms of assembly, part of the 30S ribosomal subunit. Contacts proteins S4 and S8.

Functionally, with S4 and S12 plays an important role in translational accuracy. In terms of biological role, located at the back of the 30S subunit body where it stabilizes the conformation of the head with respect to the body. The chain is Small ribosomal subunit protein uS5 from Desulfotalea psychrophila (strain LSv54 / DSM 12343).